The primary structure comprises 120 residues: Large ribosomal subunit protein eL18 (120 aa).

It belongs to the eukaryotic ribosomal protein eL18 family.

The sequence is that of Large ribosomal subunit protein eL18 from Thermoplasma acidophilum (strain ATCC 25905 / DSM 1728 / JCM 9062 / NBRC 15155 / AMRC-C165).